The sequence spans 435 residues: Eukaryotic translation initiation factor 3 subunit E (435 aa).

A PCI domain is found at 219–392; it reads FFNHPKGRDL…GHVVMGTQPL (174 aa).

The protein belongs to the eIF-3 subunit E family. In terms of assembly, component of the eukaryotic translation initiation factor 3 (eIF-3) complex. The eIF-3 complex interacts with pix. Interacts with mxt.

It is found in the cytoplasm. Component of the eukaryotic translation initiation factor 3 (eIF-3) complex, which is involved in protein synthesis of a specialized repertoire of mRNAs and, together with other initiation factors, stimulates binding of mRNA and methionyl-tRNAi to the 40S ribosome. The eIF-3 complex specifically targets and initiates translation of a subset of mRNAs involved in cell proliferation. The sequence is that of Eukaryotic translation initiation factor 3 subunit E (eIF3-S6) from Drosophila erecta (Fruit fly).